A 297-amino-acid polypeptide reads, in one-letter code: F-box only protein 2 (297 aa).

The disordered stretch occupies residues 1–42 (MDGDGDPESVGQPEEASPEEQQEEACAEEANGGEERPEDDGE). The segment covering 16 to 27 (ASPEEQQEEACA) has biased composition (acidic residues). The region spanning 45-92 (AAYLDELPEPLLLRVLAELPAAQLVQACRLVCLRWKELVDGAPLWLLK) is the F-box domain. The FBA domain occupies 114 to 297 (FYFLSKRRRN…VTNSSVWVEP (184 aa)). A carbohydrate is bound by residues 211-213 (RRD) and 279-280 (YW).

As to quaternary structure, component of the SCF(FBXO2) complex consisting of CUL1, RBX1, SKP1 and FBXO2. Predominantly detected as heterodimer with SKP1; the heterodimer with SKP1 is not part of the SCF(FBXO2) complex.

Its subcellular location is the cytoplasm. The protein resides in the microsome membrane. Its pathway is protein modification; protein ubiquitination. Functionally, substrate recognition component of a SCF (SKP1-CUL1-F-box protein) E3 ubiquitin-protein ligase complex that mediates the ubiquitination and subsequent proteasomal degradation of target proteins. Involved in the endoplasmic reticulum-associated degradation pathway (ERAD) for misfolded lumenal proteins by recognizing and binding sugar chains on unfolded glycoproteins that are retrotranslocated into the cytosol and promoting their ubiquitination and subsequent degradation. Prevents formation of cytosolic aggregates of unfolded glycoproteins that have been retrotranslocated into the cytosol. Able to recognize and bind denatured glycoproteins, preferentially those of the high-mannose type. This is F-box only protein 2 (FBXO2) from Bos taurus (Bovine).